The chain runs to 90 residues: IVTLDGEDVIDCEPILGYLHRGMEKIAENRTIIQYLPYVTRWDYLATMFTEAITVNAPEFLENIQIPQRASYIRVIMLELSRIASHLLWL.

This sequence belongs to the complex I 49 kDa subunit family. As to quaternary structure, NDH is composed of at least 16 different subunits, 5 of which are encoded in the nucleus.

It localises to the plastid. The protein resides in the chloroplast thylakoid membrane. It catalyses the reaction a plastoquinone + NADH + (n+1) H(+)(in) = a plastoquinol + NAD(+) + n H(+)(out). The enzyme catalyses a plastoquinone + NADPH + (n+1) H(+)(in) = a plastoquinol + NADP(+) + n H(+)(out). Functionally, NDH shuttles electrons from NAD(P)H:plastoquinone, via FMN and iron-sulfur (Fe-S) centers, to quinones in the photosynthetic chain and possibly in a chloroplast respiratory chain. The immediate electron acceptor for the enzyme in this species is believed to be plastoquinone. Couples the redox reaction to proton translocation, and thus conserves the redox energy in a proton gradient. This Secale cereale (Rye) protein is NAD(P)H-quinone oxidoreductase subunit H, chloroplastic (ndhH).